The chain runs to 310 residues: p-hydroxybenzoic acid efflux pump subunit AaeA (310 aa).

A helical transmembrane segment spans residues 12-32 (AITVVLVVLAFIAIFRAWSFY).

It belongs to the membrane fusion protein (MFP) (TC 8.A.1) family.

It localises to the cell inner membrane. Its function is as follows. Forms an efflux pump with AaeB. The sequence is that of p-hydroxybenzoic acid efflux pump subunit AaeA from Cronobacter sakazakii (strain ATCC BAA-894) (Enterobacter sakazakii).